A 430-amino-acid polypeptide reads, in one-letter code: Transcobalamin-2 (430 aa).

An N-terminal signal peptide occupies residues 1-18; the sequence is MELLKALLLLSGVFGALA. Disulfide bonds link C21-C270, C116-C312, and C165-C208. Cob(II)alamin contacts are provided by residues 152 to 156, H193, 193 to 197, N245, S248, Q294, and 398 to 400; these read TNYYQ, HVSVD, and WQL.

The protein belongs to the eukaryotic cobalamin transport proteins family. As to quaternary structure, interacts with CD320 (via LDL-receptor class A domains).

It localises to the secreted. Its function is as follows. Primary vitamin B12-binding and transport protein. Delivers cobalamin to cells. This is Transcobalamin-2 (Tcn2) from Mus musculus (Mouse).